The chain runs to 451 residues: Glucose-6-phosphate isomerase (451 aa).

The Proton donor role is filled by E291. Residues H312 and K426 contribute to the active site.

It belongs to the GPI family.

It localises to the cytoplasm. It catalyses the reaction alpha-D-glucose 6-phosphate = beta-D-fructose 6-phosphate. Its pathway is carbohydrate biosynthesis; gluconeogenesis. The protein operates within carbohydrate degradation; glycolysis; D-glyceraldehyde 3-phosphate and glycerone phosphate from D-glucose: step 2/4. Functionally, catalyzes the reversible isomerization of glucose-6-phosphate to fructose-6-phosphate. The protein is Glucose-6-phosphate isomerase of Caldanaerobacter subterraneus subsp. tengcongensis (strain DSM 15242 / JCM 11007 / NBRC 100824 / MB4) (Thermoanaerobacter tengcongensis).